The following is a 995-amino-acid chain: Endo-beta-N-acetylglucosaminidase EndoS (995 aa).

An N-terminal signal peptide occupies residues 1–36 (MDKHLLVKRTLGCVCAATLMGAALATHHDSLNTVKA). A GH18 domain is found at 112-432 (SLYGGYFRTW…KDATDNIFHS (321 aa)). A glycoprotein-binding residues include His151, Trp153, and Arg186. The Proton donor role is filled by Glu235. A glycoprotein is bound by residues Asp237, Gln303, Tyr305, Glu349, Glu350, Asn356, and Tyr402. 4 LRR repeats span residues 437-460 (SKAL…DFPD), 478-503 (LERF…KFKK), 562-585 (LTGL…DAAT), and 586-609 (LTSL…ENRQ). The segment at 765–923 (MVNLAEGATV…VPELQILGYP (159 aa)) is carbohydrate-binding module (CBM). 5 residues coordinate Ca(2+): Lys786, Asp789, Gln791, Pro915, and Glu916. A three-helix bundle (3H) region spans residues 924 to 995 (LPNADTIMKT…CIEKRQLLKK (72 aa)).

The protein belongs to the glycosyl hydrolase 18 family. In terms of processing, cleaved by SpeB protease; leading to loss of endoglucosidase activity. EndoS is produced and secreted prior to SpeB, suggesting that it is degraded after acting as a host immune evasion factor.

It is found in the secreted. The protein resides in the host extracellular space. The catalysed reaction is an N(4)-(oligosaccharide-(1-&gt;3)-[oligosaccharide-(1-&gt;6)]-beta-D-Man-(1-&gt;4)-beta-D-GlcNAc-(1-&gt;4)-alpha-D-GlcNAc)-L-asparaginyl-[protein] + H2O = an oligosaccharide-(1-&gt;3)-[oligosaccharide-(1-&gt;6)]-beta-D-Man-(1-&gt;4)-D-GlcNAc + N(4)-(N-acetyl-beta-D-glucosaminyl)-L-asparaginyl-[protein]. In terms of biological role, endoglucosidase that acts as a host immune evasion factor by mediating hydrolysis of the N-linked glycan from the Fc region of host immunoglobulin-gamma (IgG) during infection. Specifically catalyzes the hydrolysis of the beta-1,4 linkage between the first two N-acetylglucosamine residues of the complex-type N-linked glycan located on 'Asn-297' of the Fc region of IgG antibodies (IGHG1, IGHG2, IGHG3 or IGHG4), thereby preventing interaction between IgGs and Fc receptors and ability to activate the complement pathway. Shows a specificity for biantennary complex type N-glycans; does neither cleave larger complex type glycans nor oligomannose and nor hybrid-type glycans. Specifically acts on IgGs; does not act on immunoglobulin alpha, beta, delta or mu. This is Endo-beta-N-acetylglucosaminidase EndoS from Streptococcus pyogenes serotype M1.